We begin with the raw amino-acid sequence, 66 residues long: Large ribosomal subunit protein bL35 (66 aa).

Residues 1–24 (MPKQKTHRGAAKRFKKTGSGKLKR) show a composition bias toward basic residues. Residues 1–26 (MPKQKTHRGAAKRFKKTGSGKLKRDH) form a disordered region.

The protein belongs to the bacterial ribosomal protein bL35 family.

This Bacillus cytotoxicus (strain DSM 22905 / CIP 110041 / 391-98 / NVH 391-98) protein is Large ribosomal subunit protein bL35.